Reading from the N-terminus, the 1087-residue chain is REKLEVQCQAEKVRDDLQKQVKALEIDVEEQVCRFIELEQEKNAELMDLRQQNQALEKQLEKMRKMDLRQQNQALEKQLEKMRKFLDEQAIDREHERDVFQQEIQKLEQQLKLVPRFQPISEHQTREVEQLTNHLKEKTDKCSELLLSKEQLQRDVQERNEEIEKLECRVRELEQALLSVQTLSKRWRTRNSFGAVEPKAELCLEVQLQAERDAIDRKEKEITNLEEQLEQFREELENKNEEVQQLHMQLEIQKKESTTRLQELEQENKLFKDEMEKLGFAIKESDAVSPQDQQVLFGKFAQIIHEKEVEIDRLNEQIIKLQQQLKITTDNKVIEEKNELIRDLEAQIECLMSDQERVRKNREEEIEQLNEVIEKLQQELANIDQKTSVDPSSLSEEADSLKHQLDKVIAEKLALEHQVETTNEEMAVTKNVLKETNFKMNQLTQELCSLKREREKMERIQSVPEKSVNMSVGDLSKDKPEMDLIPTEDALAQLETQTQLRSSEESSKVSLSSLETKLLQLESTVSTKDLELTQCYKQIQDMREQGRSETEMLQTKIVSLQKVLEEKVAAALVSQVQLEAVQEYVKLCADKPAVSSDPARTEVPGLSQLAGNTMESDVSALTWRISELESQLVEMHSSLISEKEQVEIAEKNALEKEKKLQELQKLVQDSETKQRERERQSRLHGDLGVLESTTSEESGVFGELEALRAESAAPKGELANYKELAEKLQEELLVKETNMASLPKELSHVRDQLTEAEDKLSHFSEKEDKTEVQEHGTICILEPCPGQIGESFASQTEGAVQVNSHTQTPQIPVRSVGIQTHSQSDSSPEEVAEIISRFTEKIEQMRELHAAEILDMESRHISETETLKREHCIAVQLLTEECASLKSLIQGLRMPEGSSVPELTHSNAYQTREVGSSDSGSDWGQGIYLTQSQGFDTASEARGEEGETSTDSFPKKIKGLLRAVHNEGMQVLSLTEGPCGDGEDYPGHQLSESWLEERRAYLSTISSLKDFITKMQVQREVEVYDSSQSHENISDWRGELLLALQQVFLRERSVLLAAFKTELTALGTRDAAGLLNCLEQRIPRTEY.

Positions 5–461 form a coiled coil; that stretch reads EVQCQAEKVR…REREKMERIQ (457 aa). The interval 559–572 is PKA-RII subunit binding domain; it reads SLQKVLEEKVAAAL. Residues 614 to 773 are a coiled coil; that stretch reads MESDVSALTW…SEKEDKTEVQ (160 aa). The segment covering 667-685 has biased composition (basic and acidic residues); that stretch reads VQDSETKQRERERQSRLHG. The segment at 667–691 is disordered; that stretch reads VQDSETKQRERERQSRLHGDLGVLE.

Interacts with the regulatory region of protein kinase N (PKN), protein phosphatase 2A (PP2A), protein phosphatase 1 (PP1) and the immature non-phosphorylated form of PKC epsilon. Interacts with CIP4 and FNBP1. Interacts with chloride intracellular channel proteins CLIC1, CLIC4 and CLIC5. CSNK1D binding promotes its centrosomal subcellular location. Interacts with GM130/GOLGA2; leading to recruitment to the Golgi apparatus. Interacts with KCNQ1; targets protein kinase A (PKA) catalytic and regulatory subunits and protein phosphatase 1 (PP1), to the heterodimer KCNQ1-KCNE1. Interacts with PDE4DIP; this interaction stabilizes both proteins. In complex with PDE4DIP, recruits CAMSAP2 to the Golgi apparatus. Forms a pericentrosomal complex with CDK5RAP2, EB1/MAPRE1 and PDE4DIP; within this complex, MAPRE1 binding to CDK5RAP2 may be mediated by PDE4DIP. The interaction with PDE4DIP is isoform-specific. Interacts with MAPRE1 and MAPRE3. Interacts (via C-terminus) with CAMSAP2; this interaction is much stronger in the presence of PDE4DIP. Interacts with CAMSAP3. Interacts (via C-terminus) with the gamma-tubulin ring complex (gamma-TuRC), composed of gamma-tubulin, TUBGCP2, TUBGCP3, TUBGCP4, TUBGCP5 and TUBGCP6. As to expression, highly expressed in gastric parietal cells.

It localises to the golgi apparatus. The protein localises to the cytoplasm. The protein resides in the cytoskeleton. It is found in the microtubule organizing center. Its subcellular location is the centrosome. Functionally, scaffolding protein that assembles several protein kinases and phosphatases on the centrosome and Golgi apparatus. Required to maintain the integrity of the Golgi apparatus. Required for microtubule nucleation at the cis-side of the Golgi apparatus. Required for association of the centrosomes with the poles of the bipolar mitotic spindle during metaphase. In complex with PDE4DIP, recruits CAMSAP2 to the Golgi apparatus and tethers non-centrosomal minus-end microtubules to the Golgi, an important step for polarized cell movement. In complex with PDE4DIP, EB1/MAPRE1 and CDK5RAP2, contributes to microtubules nucleation and extension also from the centrosome to the cell periphery. The interaction with PDE4DIP is isoform-specific. The polypeptide is A-kinase anchor protein 9 (AKAP9) (Oryctolagus cuniculus (Rabbit)).